We begin with the raw amino-acid sequence, 324 residues long: Delta-aminolevulinic acid dehydratase (324 aa).

3 residues coordinate Zn(2+): Cys-120, Cys-122, and Cys-130. Lys-195 functions as the Schiff-base intermediate with substrate in the catalytic mechanism. 5-aminolevulinate-binding residues include Arg-205 and Arg-217. Position 233 (Glu-233) interacts with Mg(2+). Catalysis depends on Lys-248, which acts as the Schiff-base intermediate with substrate. 5-aminolevulinate is bound by residues Ser-274 and Tyr-313.

The protein belongs to the ALAD family. In terms of assembly, homooctamer. Zn(2+) serves as cofactor.

It carries out the reaction 2 5-aminolevulinate = porphobilinogen + 2 H2O + H(+). It participates in porphyrin-containing compound metabolism; protoporphyrin-IX biosynthesis; coproporphyrinogen-III from 5-aminolevulinate: step 1/4. In terms of biological role, catalyzes an early step in the biosynthesis of tetrapyrroles. Binds two molecules of 5-aminolevulinate per subunit, each at a distinct site, and catalyzes their condensation to form porphobilinogen. This Bacillus subtilis (strain 168) protein is Delta-aminolevulinic acid dehydratase (hemB).